A 426-amino-acid polypeptide reads, in one-letter code: Glutamate-1-semialdehyde 2,1-aminomutase (426 aa).

Lys265 bears the N6-(pyridoxal phosphate)lysine mark.

This sequence belongs to the class-III pyridoxal-phosphate-dependent aminotransferase family. HemL subfamily. Homodimer. Requires pyridoxal 5'-phosphate as cofactor.

The protein localises to the cytoplasm. The enzyme catalyses (S)-4-amino-5-oxopentanoate = 5-aminolevulinate. It functions in the pathway porphyrin-containing compound metabolism; protoporphyrin-IX biosynthesis; 5-aminolevulinate from L-glutamyl-tRNA(Glu): step 2/2. In Yersinia pseudotuberculosis serotype O:1b (strain IP 31758), this protein is Glutamate-1-semialdehyde 2,1-aminomutase.